The chain runs to 106 residues: Iron-sulfur cluster assembly protein CyaY (106 aa).

This sequence belongs to the frataxin family.

In terms of biological role, involved in iron-sulfur (Fe-S) cluster assembly. May act as a regulator of Fe-S biogenesis. The polypeptide is Iron-sulfur cluster assembly protein CyaY (Klebsiella pneumoniae subsp. pneumoniae (strain ATCC 700721 / MGH 78578)).